Reading from the N-terminus, the 464-residue chain is ATP synthase subunit beta (464 aa).

154–161 provides a ligand contact to ATP; the sequence is GGAGVGKT.

The protein belongs to the ATPase alpha/beta chains family. In terms of assembly, F-type ATPases have 2 components, CF(1) - the catalytic core - and CF(0) - the membrane proton channel. CF(1) has five subunits: alpha(3), beta(3), gamma(1), delta(1), epsilon(1). CF(0) has three main subunits: a(1), b(2) and c(9-12). The alpha and beta chains form an alternating ring which encloses part of the gamma chain. CF(1) is attached to CF(0) by a central stalk formed by the gamma and epsilon chains, while a peripheral stalk is formed by the delta and b chains.

The protein localises to the cell membrane. The enzyme catalyses ATP + H2O + 4 H(+)(in) = ADP + phosphate + 5 H(+)(out). Functionally, produces ATP from ADP in the presence of a proton gradient across the membrane. The catalytic sites are hosted primarily by the beta subunits. This is ATP synthase subunit beta from Mycoplasmopsis synoviae (strain 53) (Mycoplasma synoviae).